Consider the following 93-residue polypeptide: Translation initiation factor IF-1 (93 aa).

Residues 1–72 (MAKEELIQFE…EKGRLIFRHK (72 aa)) form the S1-like domain. A disordered region spans residues 70–93 (RHKDERPGGPPRSGPPRGGQFRRR).

It belongs to the IF-1 family. In terms of assembly, component of the 30S ribosomal translation pre-initiation complex which assembles on the 30S ribosome in the order IF-2 and IF-3, IF-1 and N-formylmethionyl-tRNA(fMet); mRNA recruitment can occur at any time during PIC assembly.

The protein resides in the cytoplasm. Functionally, one of the essential components for the initiation of protein synthesis. Stabilizes the binding of IF-2 and IF-3 on the 30S subunit to which N-formylmethionyl-tRNA(fMet) subsequently binds. Helps modulate mRNA selection, yielding the 30S pre-initiation complex (PIC). Upon addition of the 50S ribosomal subunit IF-1, IF-2 and IF-3 are released leaving the mature 70S translation initiation complex. This chain is Translation initiation factor IF-1, found in Nitrobacter winogradskyi (strain ATCC 25391 / DSM 10237 / CIP 104748 / NCIMB 11846 / Nb-255).